The primary structure comprises 498 residues: ATP synthase subunit beta, chloroplastic (498 aa).

172-179 (GGAGVGKT) serves as a coordination point for ATP.

It belongs to the ATPase alpha/beta chains family. As to quaternary structure, F-type ATPases have 2 components, CF(1) - the catalytic core - and CF(0) - the membrane proton channel. CF(1) has five subunits: alpha(3), beta(3), gamma(1), delta(1), epsilon(1). CF(0) has four main subunits: a(1), b(1), b'(1) and c(9-12).

The protein resides in the plastid. Its subcellular location is the chloroplast thylakoid membrane. It carries out the reaction ATP + H2O + 4 H(+)(in) = ADP + phosphate + 5 H(+)(out). Functionally, produces ATP from ADP in the presence of a proton gradient across the membrane. The catalytic sites are hosted primarily by the beta subunits. The protein is ATP synthase subunit beta, chloroplastic of Idiospermum australiense (Ribbonwood tree).